The following is a 358-amino-acid chain: Small ribosomal subunit biogenesis GTPase RsgA 2 (358 aa).

One can recognise a CP-type G domain in the interval A106–I261. Residues S151–D154 and G203–T211 each bind GTP. Zn(2+) contacts are provided by C284, C289, H291, and C297.

Belongs to the TRAFAC class YlqF/YawG GTPase family. RsgA subfamily. Monomer. Associates with 30S ribosomal subunit, binds 16S rRNA. Zn(2+) serves as cofactor.

Its subcellular location is the cytoplasm. Functionally, one of several proteins that assist in the late maturation steps of the functional core of the 30S ribosomal subunit. Helps release RbfA from mature subunits. May play a role in the assembly of ribosomal proteins into the subunit. Circularly permuted GTPase that catalyzes slow GTP hydrolysis, GTPase activity is stimulated by the 30S ribosomal subunit. The polypeptide is Small ribosomal subunit biogenesis GTPase RsgA 2 (Vibrio parahaemolyticus serotype O3:K6 (strain RIMD 2210633)).